Here is an 86-residue protein sequence, read N- to C-terminus: Photosystem I reaction center subunit PsaK 1 (86 aa).

Residues 1-8 (MLTSTLLA) constitute a propeptide that is removed on maturation. The next 2 helical transmembrane spans lie at 14–34 (LEWSPTVGIIMVIANVIAITF) and 60–80 (PALLATTAFGHILGVGLVLGL).

The protein belongs to the PsaG/PsaK family. The cyanobacterial PSI reaction center is composed of one copy each of PsaA,B,C,D,E,F,I,J,K,L,M and X, and forms dimeric and tetrameric complexes.

The protein resides in the cellular thylakoid membrane. In Nostoc sp. (strain PCC 7120 / SAG 25.82 / UTEX 2576), this protein is Photosystem I reaction center subunit PsaK 1 (psaK1).